Reading from the N-terminus, the 171-residue chain is S-ribosylhomocysteine lyase (171 aa).

Fe cation contacts are provided by histidine 54, histidine 58, and cysteine 128.

It belongs to the LuxS family. Homodimer. It depends on Fe cation as a cofactor.

It catalyses the reaction S-(5-deoxy-D-ribos-5-yl)-L-homocysteine = (S)-4,5-dihydroxypentane-2,3-dione + L-homocysteine. Functionally, involved in the synthesis of autoinducer 2 (AI-2) which is secreted by bacteria and is used to communicate both the cell density and the metabolic potential of the environment. The regulation of gene expression in response to changes in cell density is called quorum sensing. Catalyzes the transformation of S-ribosylhomocysteine (RHC) to homocysteine (HC) and 4,5-dihydroxy-2,3-pentadione (DPD). The sequence is that of S-ribosylhomocysteine lyase from Shigella boydii serotype 4 (strain Sb227).